The following is a 213-amino-acid chain: Uridine kinase (213 aa).

An ATP-binding site is contributed by 15 to 22 (GASASGKS).

It belongs to the uridine kinase family.

Its subcellular location is the cytoplasm. The enzyme catalyses uridine + ATP = UMP + ADP + H(+). It carries out the reaction cytidine + ATP = CMP + ADP + H(+). The protein operates within pyrimidine metabolism; CTP biosynthesis via salvage pathway; CTP from cytidine: step 1/3. It participates in pyrimidine metabolism; UMP biosynthesis via salvage pathway; UMP from uridine: step 1/1. This chain is Uridine kinase, found in Pectobacterium carotovorum subsp. carotovorum (strain PC1).